We begin with the raw amino-acid sequence, 201 residues long: Protamine-like protein 99C (201 aa).

Positions 93 to 143 (GGQQSSCQRQSPSARLRESERRSSRSKTLCRSAKNRQRGKPKPQQSKRRLS) are disordered. A compositionally biased stretch (polar residues) spans 94–104 (GQQSSCQRQSP). Positions 125–143 (AKNRQRGKPKPQQSKRRLS) are enriched in basic residues.

It belongs to the UPF0771 family.

It localises to the nucleus. Its subcellular location is the chromosome. Functionally, regulates chromatin compaction in spermatid nuclei and is essential for male fertility. Functions in parallel with other chromatin-condensing proteins such as ProtA, ProtB and Mst77F. The sequence is that of Protamine-like protein 99C from Drosophila melanogaster (Fruit fly).